The chain runs to 356 residues: Phosphoserine aminotransferase (356 aa).

Arg41 serves as a coordination point for L-glutamate. Pyridoxal 5'-phosphate is bound by residues 75–76 (AT), Trp100, Thr147, Asp166, and Gln189. Lys190 bears the N6-(pyridoxal phosphate)lysine mark. 227–228 (NT) is a pyridoxal 5'-phosphate binding site.

It belongs to the class-V pyridoxal-phosphate-dependent aminotransferase family. SerC subfamily. In terms of assembly, homodimer. Pyridoxal 5'-phosphate serves as cofactor.

The protein resides in the cytoplasm. The enzyme catalyses O-phospho-L-serine + 2-oxoglutarate = 3-phosphooxypyruvate + L-glutamate. The catalysed reaction is 4-(phosphooxy)-L-threonine + 2-oxoglutarate = (R)-3-hydroxy-2-oxo-4-phosphooxybutanoate + L-glutamate. Its pathway is amino-acid biosynthesis; L-serine biosynthesis; L-serine from 3-phospho-D-glycerate: step 2/3. Its function is as follows. Catalyzes the reversible conversion of 3-phosphohydroxypyruvate to phosphoserine and of 3-hydroxy-2-oxo-4-phosphonooxybutanoate to phosphohydroxythreonine. The polypeptide is Phosphoserine aminotransferase (Exiguobacterium sp. (strain ATCC BAA-1283 / AT1b)).